The primary structure comprises 299 residues: Protein translocase subunit SecF (299 aa).

Transmembrane regions (helical) follow at residues 14 to 34 (VLIVSAVLILVGLIYTFFYHG), 142 to 162 (IFLVLGTFILILIYITLRFKL), 166 to 186 (IASILSIFHDIFFIVAFLGVF), 193 to 213 (YIIVAILTIIGYSLNDTIIIF), 245 to 265 (LTSVTTFVAVFSIYVFTEGSI), and 270 to 290 (LVFMVGVIVGTYSSVFIASPI).

The protein belongs to the SecD/SecF family. SecF subfamily. As to quaternary structure, forms a complex with SecD. Part of the essential Sec protein translocation apparatus which comprises SecA, SecYEG and auxiliary proteins SecDF. Other proteins may also be involved.

It localises to the cell inner membrane. Part of the Sec protein translocase complex. Interacts with the SecYEG preprotein conducting channel. SecDF uses the proton motive force (PMF) to complete protein translocation after the ATP-dependent function of SecA. In Borreliella burgdorferi (strain ATCC 35210 / DSM 4680 / CIP 102532 / B31) (Borrelia burgdorferi), this protein is Protein translocase subunit SecF.